The sequence spans 468 residues: FAD-linked oxidoreductase azaG (468 aa).

The first 16 residues, 1-16, serve as a signal peptide directing secretion; sequence MQLSGILSWLLSWLWA. Asparagine 44 is a glycosylation site (N-linked (GlcNAc...) asparagine). The 175-residue stretch at 54–228 folds into the FAD-binding PCMH-type domain; it reads TVHGAPHYLG…TSATYRTHQA (175 aa). N-linked (GlcNAc...) asparagine glycosylation is found at asparagine 272, asparagine 348, and asparagine 464.

It belongs to the oxygen-dependent FAD-linked oxidoreductase family. Requires FAD as cofactor.

Its pathway is secondary metabolite biosynthesis. Its function is as follows. FAD-linked oxidoreductase; part of the gene cluster that mediates the biosynthesis of azaphilones, a class of fungal metabolites characterized by a highly oxygenated pyrano-quinone bicyclic core and exhibiting a broad range of bioactivities. In the first step, the non-reducing polyketide synthase azaA forms the hexaketide precursor from successive condensations of five malonyl-CoA units, presumably with a simple acetyl-CoA starter unit. The reactive polyketide chain then undergoes a PT-mediated C2-C7 cyclization to afford the aromatic ring and is eventually released as an aldehyde through the R-domain. The putative ketoreductase azaE is proposed to catalyze the reduction of the terminal ketone resulting in the early culture product FK17-P2a. The monooxygenase azaH was demonstrated to be the only enzyme required to convert FK17-P2a to azanigerone E. AzaH first hydroxylates the benzaldehyde intermediate FK17-P2a at C4, which triggers the formation of the pyran-ring to afford azanigerone E. In parallel, the 2,4-dimethylhexanoyl chain is synthesized by the HR-PKS azaB and is proposed to be transferred to the C4-hydroxyl of azanigerone E by the acyltransferase azaD directly from the ACP domain of azaB. Alternatively, the 2,4-dimethyl-hexanoyl chain may be offloaded from the HR-PKS as a carboxylic acid and converted to an acyl-CoA by azaF. The resulting acyl-CoA molecule could then be taken up as a substrate by AzaD to form azanigerone B. To yield the carboxylic acid substituent in azanigerone A, the hydroxypropyl side chain of azanigerone B would need to undergo a C-C oxidative cleavage catalyzed by cytochrome P450 AzaI. AzaI is proposed to act on a vicinal diol that leads to a C-C bond scission either through an alkoxyradical intermediate or a peroxy complex. In the biosynthesis of azanigerone A, azanigerone B first undergoes hydroxylation at C10, possibly catalyzed by one of the two FAD-dependent monooxygenases encoded in the cluster, azaG or azaL, resulting in the vicinal diol azanigerone C. Oxidative cleavage of azanigerone C by azaI would yield the corresponding aldehyde derivative of azanigerone A. Finally, the dehydrogenase azaJ is proposed to convert the aldehyde functional group into the carboxylic acid, completing the conversion from azanigerone B to azanigerone A. Alternatively, the oxidation of aldehyde to carboxylic acid may be catalyzed by the same P450 enzyme azaI via consecutive oxidation or by endogenous alcohol dehydrogenase. This Aspergillus niger (strain ATCC 1015 / CBS 113.46 / FGSC A1144 / LSHB Ac4 / NCTC 3858a / NRRL 328 / USDA 3528.7) protein is FAD-linked oxidoreductase azaG.